Consider the following 189-residue polypeptide: 2-oxoglutarate synthase subunit KorC (189 aa).

Heterotetramer of the KorA, KorB, KorC and KorD subunits.

It carries out the reaction 2 oxidized [2Fe-2S]-[ferredoxin] + 2-oxoglutarate + CoA = succinyl-CoA + 2 reduced [2Fe-2S]-[ferredoxin] + CO2 + H(+). This is 2-oxoglutarate synthase subunit KorC (korC) from Methanothermobacter thermautotrophicus (strain ATCC 29096 / DSM 1053 / JCM 10044 / NBRC 100330 / Delta H) (Methanobacterium thermoautotrophicum).